Here is a 449-residue protein sequence, read N- to C-terminus: UDP-N-acetylmuramoylalanine--D-glutamate ligase (449 aa).

Residue 116 to 122 coordinates ATP; the sequence is GSNGKST.

Belongs to the MurCDEF family.

It localises to the cytoplasm. It catalyses the reaction UDP-N-acetyl-alpha-D-muramoyl-L-alanine + D-glutamate + ATP = UDP-N-acetyl-alpha-D-muramoyl-L-alanyl-D-glutamate + ADP + phosphate + H(+). It participates in cell wall biogenesis; peptidoglycan biosynthesis. Its function is as follows. Cell wall formation. Catalyzes the addition of glutamate to the nucleotide precursor UDP-N-acetylmuramoyl-L-alanine (UMA). The polypeptide is UDP-N-acetylmuramoylalanine--D-glutamate ligase (Shewanella violacea (strain JCM 10179 / CIP 106290 / LMG 19151 / DSS12)).